A 55-amino-acid polypeptide reads, in one-letter code: Neurotoxin BmP08 (55 aa).

Residues 1–23 (MKIFFAVLVILVLFSMLIWTAYG) form the signal peptide. 3 cysteine pairs are disulfide-bonded: Cys-30/Cys-45, Cys-36/Cys-50, and Cys-39/Cys-53.

As to expression, expressed by the venom gland.

It is found in the secreted. The chain is Neurotoxin BmP08 from Olivierus martensii (Manchurian scorpion).